The primary structure comprises 192 residues: MRSATVHRQTRETDITVEISLDGKGNSTIDTGIGFLDHMLTSFAKHGLVDLMIKARGDLQVDDHHTVEDIGISLGEAYRDALKEKTGIERFGHALVPMDEALAVVAVDISGRGYSVFKADFRQPKIGDYSTAMTRHFIDSFARSAGITINVKIEGEDDHHMVEAMFKALGLALSMAAAKNERRGIPSTKGVL.

This sequence belongs to the imidazoleglycerol-phosphate dehydratase family.

The protein localises to the cytoplasm. The enzyme catalyses D-erythro-1-(imidazol-4-yl)glycerol 3-phosphate = 3-(imidazol-4-yl)-2-oxopropyl phosphate + H2O. It functions in the pathway amino-acid biosynthesis; L-histidine biosynthesis; L-histidine from 5-phospho-alpha-D-ribose 1-diphosphate: step 6/9. The protein is Imidazoleglycerol-phosphate dehydratase of Methanocella arvoryzae (strain DSM 22066 / NBRC 105507 / MRE50).